The following is a 379-amino-acid chain: Alkanesulfonate monooxygenase (379 aa).

The protein belongs to the SsuD family.

It catalyses the reaction an alkanesulfonate + FMNH2 + O2 = an aldehyde + FMN + sulfite + H2O + 2 H(+). In terms of biological role, catalyzes the desulfonation of aliphatic sulfonates. The protein is Alkanesulfonate monooxygenase of Sorangium cellulosum (strain So ce56) (Polyangium cellulosum (strain So ce56)).